Reading from the N-terminus, the 344-residue chain is Nicotinate-nucleotide--dimethylbenzimidazole phosphoribosyltransferase (344 aa).

Catalysis depends on Glu-310, which acts as the Proton acceptor.

It belongs to the CobT family.

The enzyme catalyses 5,6-dimethylbenzimidazole + nicotinate beta-D-ribonucleotide = alpha-ribazole 5'-phosphate + nicotinate + H(+). The protein operates within nucleoside biosynthesis; alpha-ribazole biosynthesis; alpha-ribazole from 5,6-dimethylbenzimidazole: step 1/2. Catalyzes the synthesis of alpha-ribazole-5'-phosphate from nicotinate mononucleotide (NAMN) and 5,6-dimethylbenzimidazole (DMB). This chain is Nicotinate-nucleotide--dimethylbenzimidazole phosphoribosyltransferase, found in Chromobacterium violaceum (strain ATCC 12472 / DSM 30191 / JCM 1249 / CCUG 213 / NBRC 12614 / NCIMB 9131 / NCTC 9757 / MK).